Here is a 494-residue protein sequence, read N- to C-terminus: Inositol-trisphosphate 3-kinase homolog (494 aa).

Residues S206, K218, E260 to L262, and D276 each bind ATP. Residues K278 and K322–R329 each bind substrate. ATP contacts are provided by K346 and D426. K429 contacts substrate.

This sequence belongs to the inositol phosphokinase (IPK) family. As to expression, expressed in spermatheca.

It carries out the reaction 1D-myo-inositol 1,4,5-trisphosphate + ATP = 1D-myo-inositol 1,3,4,5-tetrakisphosphate + ADP + H(+). With respect to regulation, unlike mammalian IP3K, may not be regulated by calmodulin. Probably by regulating inositol 1,4,5-trisphosphate levels, negatively regulates posterior body wall muscle contractions required for defecation and let-23 signaling pathway that controls spermathecal dilation and ovulation. May also regulate ovulation downstream of actin cross-linker fln-1. This is Inositol-trisphosphate 3-kinase homolog from Caenorhabditis elegans.